We begin with the raw amino-acid sequence, 1493 residues long: Mitogen-activated protein kinase kinase kinase 1 (1493 aa).

Positions Met1–Glu23 are enriched in low complexity. Disordered regions lie at residues Met1–Arg178 and His194–Ser300. Ala2 carries the N-acetylalanine modification. The residue at position 21 (Ser21) is a Phosphoserine. The segment covering Ala24–Gln35 has biased composition (gly residues). Over residues Gly36–Gly46 the composition is skewed to low complexity. A compositionally biased stretch (pro residues) spans Pro89 to Glu99. Residues Ala140–Gly156 are compositionally biased toward low complexity. Ser142 bears the Phosphoserine mark. Positions Arg157–Arg178 are enriched in basic and acidic residues. Over residues Ser235–Ser256 the composition is skewed to low complexity. Phosphoserine is present on Ser270. Phosphothreonine is present on Thr280. Residues Ser287, Ser292, and Ser295 each carry the phosphoserine modification. The SWIM-type zinc finger occupies Tyr333 to Phe361. A compositionally biased stretch (low complexity) spans Ser411–Asn428. A disordered region spans residues Ser411 to Lys431. The RING-type zinc-finger motif lies at Cys438 to Arg487. Phosphoserine occurs at positions 502 and 526. 2 disordered regions span residues Ser506–Gln531 and Glu895–Ala914. Low complexity predominate over residues Ala512–Gln527. Ser915 is modified (phosphoserine). 2 disordered regions span residues Ser927–Ser957 and Pro992–Leu1066. Residues Ala998–Asn1013 show a composition bias toward polar residues. Ser999 and Ser1024 each carry phosphoserine. The span at Gly1049–Thr1063 shows a compositional bias: polar residues. In terms of domain architecture, Protein kinase spans Trp1224 to Phe1489. ATP contacts are provided by residues Ile1230–Cys1238 and Lys1253. Asp1350 (proton acceptor) is an active-site residue. Residues Thr1381 and Thr1393 each carry the phosphothreonine; by autocatalysis modification.

The protein belongs to the protein kinase superfamily. STE Ser/Thr protein kinase family. MAP kinase kinase kinase subfamily. In terms of assembly, binds both upstream activators and downstream substrates in multimolecular complexes through its N-terminus. Oligomerizes after binding MAP4K2 or TRAF2. Interacts with AXIN1. Interacts (via the kinase catalytic domain) with STK38. Interacts with GRIPAP1. Mg(2+) is required as a cofactor. Post-translationally, autophosphorylated. Highly expressed in the heart and spleen while a lower level expression is seen in the liver.

It catalyses the reaction L-seryl-[protein] + ATP = O-phospho-L-seryl-[protein] + ADP + H(+). It carries out the reaction L-threonyl-[protein] + ATP = O-phospho-L-threonyl-[protein] + ADP + H(+). With respect to regulation, activated by autophosphorylation on Thr-1381 and Thr-1393 following oligomerization. Functionally, component of a protein kinase signal transduction cascade. Activates the ERK and JNK kinase pathways by phosphorylation of MAP2K1 and MAP2K4. May phosphorylate the MAPK8/JNK1 kinase. Activates CHUK and IKBKB, the central protein kinases of the NF-kappa-B pathway. This chain is Mitogen-activated protein kinase kinase kinase 1 (Map3k1), found in Mus musculus (Mouse).